A 426-amino-acid chain; its full sequence is UPF0597 protein CLB_1750 (426 aa).

The protein belongs to the UPF0597 family.

This is UPF0597 protein CLB_1750 from Clostridium botulinum (strain ATCC 19397 / Type A).